The primary structure comprises 264 residues: Neurexophilin-2 (264 aa).

Residues 1–22 form the signal peptide; it reads MRLRPLPLVVVPGLLQLLFCDS. Positions 23–90 are II; sequence KEVVHATEGL…WDWLANITEI (68 aa). 4 N-linked (GlcNAc...) asparagine glycosylation sites follow: asparagine 86, asparagine 139, asparagine 149, and asparagine 155. An III region spans residues 91 to 169; sequence QEPLARTKRR…LVPPSKVVEF (79 aa). An IV (linker domain) region spans residues 170–178; sequence EVSPQSTLE. The segment at 179–264 is v (Cys-rich); it reads TKESKSFNCR…HSETPYLSSG (86 aa).

It belongs to the neurexophilin family. May be proteolytically processed at the boundary between the N-terminal non-conserved and the central conserved domain in neuron-like cells. In terms of tissue distribution, expressed in brain and kidney.

The protein resides in the secreted. Its function is as follows. May be signaling molecules that resemble neuropeptides and that act by binding to alpha-neurexins and possibly other receptors. The sequence is that of Neurexophilin-2 (NXPH2) from Homo sapiens (Human).